The following is a 340-amino-acid chain: Glyceraldehyde-3-phosphate dehydrogenase, cytosolic (340 aa).

NAD(+) contacts are provided by residues 16-17 (RI), Asp38, and Arg85. Residues 156 to 158 (SCT), Thr187, 216 to 217 (TG), and Arg239 contribute to the D-glyceraldehyde 3-phosphate site. The active-site Nucleophile is Cys157. Asn321 serves as a coordination point for NAD(+).

It belongs to the glyceraldehyde-3-phosphate dehydrogenase family. In terms of assembly, homotetramer.

The protein resides in the cytoplasm. The catalysed reaction is D-glyceraldehyde 3-phosphate + phosphate + NAD(+) = (2R)-3-phospho-glyceroyl phosphate + NADH + H(+). It functions in the pathway carbohydrate degradation; glycolysis; pyruvate from D-glyceraldehyde 3-phosphate: step 1/5. Key enzyme in glycolysis that catalyzes the first step of the pathway by converting D-glyceraldehyde 3-phosphate (G3P) into 3-phospho-D-glyceroyl phosphate. Essential for the maintenance of cellular ATP levels and carbohydrate metabolism. The sequence is that of Glyceraldehyde-3-phosphate dehydrogenase, cytosolic from Ginkgo biloba (Ginkgo).